Here is a 554-residue protein sequence, read N- to C-terminus: Chaperonin GroEL (554 aa).

ATP contacts are provided by residues 29–32 (TLGP), Lys50, 86–90 (DGTTT), Gly418, and Asp499. Residues 528–554 (HEEDNNTNRSGGGVGGGHHGGMGGMDF) form a disordered region. Gly residues predominate over residues 537–554 (SGGGVGGGHHGGMGGMDF).

It belongs to the chaperonin (HSP60) family. Forms a cylinder of 14 subunits composed of two heptameric rings stacked back-to-back. Interacts with the co-chaperonin GroES.

Its subcellular location is the cytoplasm. The catalysed reaction is ATP + H2O + a folded polypeptide = ADP + phosphate + an unfolded polypeptide.. Together with its co-chaperonin GroES, plays an essential role in assisting protein folding. The GroEL-GroES system forms a nano-cage that allows encapsulation of the non-native substrate proteins and provides a physical environment optimized to promote and accelerate protein folding. This chain is Chaperonin GroEL, found in Orientia tsutsugamushi (strain Boryong) (Rickettsia tsutsugamushi).